A 126-amino-acid polypeptide reads, in one-letter code: Small ribosomal subunit protein uS12 (126 aa).

The disordered stretch occupies residues 1-23; the sequence is MPTISQLVRKGRKTVASKSTAPA. D89 bears the 3-methylthioaspartic acid mark.

The protein belongs to the universal ribosomal protein uS12 family. Part of the 30S ribosomal subunit. Contacts proteins S8 and S17. May interact with IF1 in the 30S initiation complex.

Functionally, with S4 and S5 plays an important role in translational accuracy. Its function is as follows. Interacts with and stabilizes bases of the 16S rRNA that are involved in tRNA selection in the A site and with the mRNA backbone. Located at the interface of the 30S and 50S subunits, it traverses the body of the 30S subunit contacting proteins on the other side and probably holding the rRNA structure together. The combined cluster of proteins S8, S12 and S17 appears to hold together the shoulder and platform of the 30S subunit. The sequence is that of Small ribosomal subunit protein uS12 from Clostridium perfringens (strain ATCC 13124 / DSM 756 / JCM 1290 / NCIMB 6125 / NCTC 8237 / Type A).